Reading from the N-terminus, the 103-residue chain is MHVKKGDKVQVISGKDKGKQGVILAAFPKKNRVIVEGVNIVKKHAKPSQANPQGGIITKEAPIHVSKVMPLDPKTGLPTRIGYKIVDGKKVRYAKRSGEILDK.

Belongs to the universal ribosomal protein uL24 family. Part of the 50S ribosomal subunit.

Functionally, one of two assembly initiator proteins, it binds directly to the 5'-end of the 23S rRNA, where it nucleates assembly of the 50S subunit. One of the proteins that surrounds the polypeptide exit tunnel on the outside of the subunit. This Geobacillus sp. (strain WCH70) protein is Large ribosomal subunit protein uL24.